The chain runs to 677 residues: Forkhead box protein P1 (677 aa).

A compositionally biased stretch (polar residues) spans 1 to 18 (MMQESGTETKSNGSAIQN). Positions 1–43 (MMQESGTETKSNGSAIQNGSGGSNHLLECGGLREGRSNGETPA) are disordered. At Ser-83 the chain carries Phosphoserine. The span at 270-283 (IMNPHASTNGQLSV) shows a compositional bias: polar residues. The interval 270 to 298 (IMNPHASTNGQLSVHTPKRESLSHEEHPH) is disordered. Over residues 286-298 (PKRESLSHEEHPH) the composition is skewed to basic and acidic residues. A Glycyl lysine isopeptide (Lys-Gly) (interchain with G-Cter in SUMO2) cross-link involves residue Lys-287. A C2H2-type zinc finger spans residues 306 to 331 (GVCKWPGCEAVCEDFQSFLKHLNSEH). The segment at 348–369 (VQQLELQLAKDKERLQAMMTHL) is leucine-zipper. Residues Lys-372 and Lys-377 each participate in a glycyl lysine isopeptide (Lys-Gly) (interchain with G-Cter in SUMO2) cross-link. Residues 382-386 (PLNLV) are CTBP1-binding. Positions 390 to 403 (TLSKSASEASPQSL) are enriched in polar residues. Residues 390–422 (TLSKSASEASPQSLPHTPTTPTAPLTPVTQGPS) form a disordered region. The segment covering 404–418 (PHTPTTPTAPLTPVT) has biased composition (low complexity). Lys-442 is covalently cross-linked (Glycyl lysine isopeptide (Lys-Gly) (interchain with G-Cter in SUMO2)). Residues 465–555 (RPPFTYASLI…PQKISGNPSL (91 aa)) constitute a DNA-binding region (fork-head). Positions 611-677 (EHTNSNESDS…EDEPVNEDME (67 aa)) are disordered. The span at 612–623 (HTNSNESDSSPG) shows a compositional bias: polar residues. Thr-653 carries the phosphothreonine modification. At Ser-658 the chain carries Phosphoserine. Positions 667 to 677 (YEDEPVNEDME) are enriched in acidic residues.

In terms of assembly, forms homodimers and heterodimers with FOXP2 and FOXP4. Dimerization is required for DNA-binding. Self-associates. Interacts with CTBP1. Interacts with NCOR2 and AR. Interacts with FOXP2. Interacts with TBR1. Interacts with AURKA; this interaction facilitates the phosphorylation of FOXP1, which suppresses the expression of FBXL7. Interacts with ZMYM2. As to expression, isoform 8 is specifically expressed in embryonic stem cells.

The protein resides in the nucleus. Its function is as follows. Transcriptional repressor. Can act with CTBP1 to synergistically repress transcription but CTPBP1 is not essential. Plays an important role in the specification and differentiation of lung epithelium. Acts cooperatively with FOXP4 to regulate lung secretory epithelial cell fate and regeneration by restricting the goblet cell lineage program; the function may involve regulation of AGR2. Essential transcriptional regulator of B-cell development. Involved in regulation of cardiac muscle cell proliferation. Involved in the columnar organization of spinal motor neurons. Promotes the formation of the lateral motor neuron column (LMC) and the preganglionic motor column (PGC) and is required for respective appropriate motor axon projections. The segment-appropriate generation of spinal cord motor columns requires cooperation with other Hox proteins. Can regulate PITX3 promoter activity; may promote midbrain identity in embryonic stem cell-derived dopamine neurons by regulating PITX3. Negatively regulates the differentiation of T follicular helper cells T(FH)s. Involved in maintenance of hair follicle stem cell quiescence; the function probably involves regulation of FGF18. Represses transcription of various pro-apoptotic genes and cooperates with NF-kappa B-signaling in promoting B-cell expansion by inhibition of caspase-dependent apoptosis. Binds to CSF1R promoter elements and is involved in regulation of monocyte differentiation and macrophage functions; repression of CSF1R in monocytes seems to involve NCOR2 as corepressor. Involved in endothelial cell proliferation, tube formation and migration indicative for a role in angiogenesis; the role in neovascularization seems to implicate suppression of SEMA5B. Can negatively regulate androgen receptor signaling. Acts as a transcriptional activator of the FBXL7 promoter; this activity is regulated by AURKA. In terms of biological role, involved in transcriptional regulation in embryonic stem cells (ESCs). Stimulates expression of transcription factors that are required for pluripotency and decreases expression of differentiation-associated genes. Has distinct DNA-binding specifities as compared to the canonical form and preferentially binds DNA with the sequence 5'-CGATACAA-3' (or closely related sequences). Promotes ESC self-renewal and pluripotency. This Homo sapiens (Human) protein is Forkhead box protein P1 (FOXP1).